The primary structure comprises 198 residues: Protein LKAAEAR1 (198 aa).

Residues 1–47 (MPTLGVKGARERDKNSASGAGAGAGAGAGAGEKHRKGPRTTDPPKTG) form a disordered region. Positions 20-30 (AGAGAGAGAGA) are enriched in gly residues.

The polypeptide is Protein LKAAEAR1 (Lkaaear1) (Mus musculus (Mouse)).